Reading from the N-terminus, the 249-residue chain is NAD(P)H-hydrate epimerase (249 aa).

One can recognise a YjeF N-terminal domain in the interval 11–233 (AQQIDVELMS…ELGKKHELNI (223 aa)). 62-66 (NQGGD) is a binding site for (6S)-NADPHX. Residues Q63 and D127 each contribute to the K(+) site. Residues 131–137 (GFSFQPP) and D162 contribute to the (6S)-NADPHX site. K(+) is bound at residue S165.

Belongs to the NnrE/AIBP family. It depends on K(+) as a cofactor.

Its subcellular location is the cytoplasm. The protein localises to the mitochondrion. It carries out the reaction (6R)-NADHX = (6S)-NADHX. It catalyses the reaction (6R)-NADPHX = (6S)-NADPHX. In terms of biological role, catalyzes the epimerization of the S- and R-forms of NAD(P)HX, a damaged form of NAD(P)H that is a result of enzymatic or heat-dependent hydration. This is a prerequisite for the S-specific NAD(P)H-hydrate dehydratase to allow the repair of both epimers of NAD(P)HX. The chain is NAD(P)H-hydrate epimerase from Cryptococcus neoformans var. neoformans serotype D (strain JEC21 / ATCC MYA-565) (Filobasidiella neoformans).